A 656-amino-acid polypeptide reads, in one-letter code: MSDIQQDSTSTTLGGTSLGGTSLGGTSLGGTSLGGTSLGGTSLGGTSLGGSTTTSTTTPKSTNSKNKKKKQTSSNNNNNNNNNNNNNNENNRDNDAGSSNKSFMPLNNNEDEGTKDYKQGGYHPVRRNDVYGNRYQVVDKLGWGHFSTVWLCNDKDTPITTSSSSSSTTTTTTSSSSNGNGNGNGGNVIGYKQVALKIVRSARTYSETAEDEIKILNAISKYNAQDKCVARLLDHFTHRGPNGRHYCMVFELLGNNLLDLIKHHRYRGMPITLVKTLMKQTLIALDYIHTKCKIIHTDLKPENVLLEKSFDFFTSNDYIWSEKYGYFKNRTSSSNKQSQQQQQPQQQQSQQNINDYSDDSDDSHSDYSDSEDELKNKGNKKSSNRDRDNNKNKNIKKDDNKSSVNEINNISKENTDNKDLNSSEENKKEEEQQQNKKEEPTTTTTTATATATTTTTTGTEEFKFVNGISYKFKKNNELFNENHYPRAQLVDLGNACWTDKHFTDDIQTRQYRAPEAIVKAKWGTPVDIWSAACMAFELATGDHLFKPKSGKGFEKSDDHLALMIELLGKPPRFIFAGGDESRVYFTHKGDLRKIPDLSDQWPLFSVLTEKYKFSIQEAKDFEAFLLPMLNYLPEKRATAKDCLNHTWLKDVPPFLN.

Positions 1-127 (MSDIQQDSTS…KQGGYHPVRR (127 aa)) are disordered. A compositionally biased stretch (gly residues) spans 16-48 (TSLGGTSLGGTSLGGTSLGGTSLGGTSLGGTSL). Composition is skewed to low complexity over residues 49–64 (GGST…STNS) and 72–89 (TSSN…NNNE). The segment covering 96 to 108 (AGSSNKSFMPLNN) has biased composition (polar residues). A Protein kinase domain is found at 135–648 (YQVVDKLGWG…AKDCLNHTWL (514 aa)). Residue 141 to 149 (LGWGHFSTV) coordinates ATP. The tract at residues 157–185 (TPITTSSSSSSTTTTTTSSSSNGNGNGNG) is disordered. Over residues 160 to 179 (TTSSSSSSTTTTTTSSSSNG) the composition is skewed to low complexity. Lys197 provides a ligand contact to ATP. The Proton acceptor role is filled by Asp298. The segment at 330-454 (RTSSSNKQSQ…TTATATATTT (125 aa)) is disordered. Over residues 332 to 355 (SSSNKQSQQQQQPQQQQSQQNIND) the composition is skewed to low complexity. 2 stretches are compositionally biased toward basic and acidic residues: residues 383-401 (SNRD…DDNK) and 413-440 (ENTD…KEEP). Residues 441-454 (TTTTTTATATATTT) show a composition bias toward low complexity.

The protein belongs to the protein kinase superfamily. CMGC Ser/Thr protein kinase family.

It carries out the reaction L-seryl-[protein] + ATP = O-phospho-L-seryl-[protein] + ADP + H(+). It catalyses the reaction L-threonyl-[protein] + ATP = O-phospho-L-threonyl-[protein] + ADP + H(+). The sequence is that of Probable serine/threonine-protein kinase sky1 (sky1) from Dictyostelium discoideum (Social amoeba).